The primary structure comprises 54 residues: Large ribosomal subunit protein bL32c (54 aa).

Belongs to the bacterial ribosomal protein bL32 family.

It localises to the plastid. The protein resides in the chloroplast. This Piper cenocladum (Ant piper) protein is Large ribosomal subunit protein bL32c.